The primary structure comprises 390 residues: MNHELPVISLFSGAGGLDCAIESCAEPPLVQDGSGSPLRVAVATDYEQTALDTLSANFPHTKTLCGDIQTIPTAELLEAGGLKPGDPTLVIGGPPCTPFSKSGFWIEEKRNSADPNASLLDEYVRVVRESKPEAFILENVQGLTYKTHQAQFDRLIAGLKDAGYNPTFRVLLAAEYGVPQLRRRVFVVGRRDGKAFHFPETTHSGESERDRVIDHTKIPFTSLREALAGLPDVPEAGEVVEGTYAELAAEVPPGQNYLWHTDRYGGRNEFKWRSRYWTFLLKADPDRPSTTLQAQPGPWVGPFHWENVKNANGEERARRFRVAEMKRIMTFPDEFVFTGVKREVQRQIGNPVPVELGKVVVRALMEQLGYLDSRGTTIPSQAGHEQLELI.

Residues 5-371 (LPVISLFSGA…RALMEQLGYL (367 aa)) enclose the SAM-dependent MTase C5-type domain. C96 is an active-site residue.

It belongs to the class I-like SAM-binding methyltransferase superfamily. C5-methyltransferase family.

The catalysed reaction is a 2'-deoxycytidine in DNA + S-adenosyl-L-methionine = a 5-methyl-2'-deoxycytidine in DNA + S-adenosyl-L-homocysteine + H(+). A beta methylase recognizes the double-stranded sequence 5'-GAGCTC-3', methylates C-4 on both strands, and protects the DNA from cleavage by the SacI endonuclease. The protein is Type II methyltransferase M.SacI of Streptomyces achromogenes.